We begin with the raw amino-acid sequence, 157 residues long: 2-C-methyl-D-erythritol 2,4-cyclodiphosphate synthase (157 aa).

Positions 8 and 10 each coordinate a divalent metal cation. Residues aspartate 8–histidine 10 and histidine 34–serine 35 each bind 4-CDP-2-C-methyl-D-erythritol 2-phosphate. A divalent metal cation is bound at residue histidine 42. Residues aspartate 56–glycine 58, phenylalanine 61–aspartate 65, alanine 100–alanine 106, threonine 132–glutamate 135, phenylalanine 139, and arginine 142 each bind 4-CDP-2-C-methyl-D-erythritol 2-phosphate.

Belongs to the IspF family. In terms of assembly, homotrimer. A divalent metal cation serves as cofactor.

The catalysed reaction is 4-CDP-2-C-methyl-D-erythritol 2-phosphate = 2-C-methyl-D-erythritol 2,4-cyclic diphosphate + CMP. It functions in the pathway isoprenoid biosynthesis; isopentenyl diphosphate biosynthesis via DXP pathway; isopentenyl diphosphate from 1-deoxy-D-xylulose 5-phosphate: step 4/6. Functionally, involved in the biosynthesis of isopentenyl diphosphate (IPP) and dimethylallyl diphosphate (DMAPP), two major building blocks of isoprenoid compounds. Catalyzes the conversion of 4-diphosphocytidyl-2-C-methyl-D-erythritol 2-phosphate (CDP-ME2P) to 2-C-methyl-D-erythritol 2,4-cyclodiphosphate (ME-CPP) with a corresponding release of cytidine 5-monophosphate (CMP). The sequence is that of 2-C-methyl-D-erythritol 2,4-cyclodiphosphate synthase from Pseudomonas entomophila (strain L48).